Here is a 111-residue protein sequence, read N- to C-terminus: Large ribosomal subunit protein uL22 (111 aa).

The protein belongs to the universal ribosomal protein uL22 family. In terms of assembly, part of the 50S ribosomal subunit.

This protein binds specifically to 23S rRNA; its binding is stimulated by other ribosomal proteins, e.g. L4, L17, and L20. It is important during the early stages of 50S assembly. It makes multiple contacts with different domains of the 23S rRNA in the assembled 50S subunit and ribosome. Its function is as follows. The globular domain of the protein is located near the polypeptide exit tunnel on the outside of the subunit, while an extended beta-hairpin is found that lines the wall of the exit tunnel in the center of the 70S ribosome. This Chlamydia trachomatis serovar L2b (strain UCH-1/proctitis) protein is Large ribosomal subunit protein uL22.